The primary structure comprises 437 residues: tRNA-2-methylthio-N(6)-dimethylallyladenosine synthase (437 aa).

One can recognise an MTTase N-terminal domain in the interval 3–120 (RKLFIETHGC…LPEMIDAART (118 aa)). 6 residues coordinate [4Fe-4S] cluster: cysteine 12, cysteine 49, cysteine 83, cysteine 157, cysteine 161, and cysteine 164. A Radical SAM core domain is found at 143 to 370 (RVDGPSAYVS…QQRINQQGFE (228 aa)). The 65-residue stretch at 373–437 (RRMVGTTQRI…PHSLRGSLLS (65 aa)) folds into the TRAM domain.

It belongs to the methylthiotransferase family. MiaB subfamily. In terms of assembly, monomer. The cofactor is [4Fe-4S] cluster.

The protein localises to the cytoplasm. It catalyses the reaction N(6)-dimethylallyladenosine(37) in tRNA + (sulfur carrier)-SH + AH2 + 2 S-adenosyl-L-methionine = 2-methylsulfanyl-N(6)-dimethylallyladenosine(37) in tRNA + (sulfur carrier)-H + 5'-deoxyadenosine + L-methionine + A + S-adenosyl-L-homocysteine + 2 H(+). Functionally, catalyzes the methylthiolation of N6-(dimethylallyl)adenosine (i(6)A), leading to the formation of 2-methylthio-N6-(dimethylallyl)adenosine (ms(2)i(6)A) at position 37 in tRNAs that read codons beginning with uridine. This is tRNA-2-methylthio-N(6)-dimethylallyladenosine synthase from Stutzerimonas stutzeri (strain A1501) (Pseudomonas stutzeri).